A 74-amino-acid chain; its full sequence is MTLIFWTKNGQEMEFDLVENVEIDEKIITFDYYGEGEKRGVVFILNNLAGMAVEDENSESESKDGASWFKVYRG.

A disordered region spans residues 55–74 (DENSESESKDGASWFKVYRG).

This is an uncharacterized protein from Listeria innocua serovar 6a (strain ATCC BAA-680 / CLIP 11262).